Consider the following 436-residue polypeptide: Testican-3 (436 aa).

Positions 1 to 22 are cleaved as a signal peptide; the sequence is MLKVSALLCVCAAAWCSQTLAA. Cystine bridges form between Cys90–Cys101, Cys95–Cys111, Cys139–Cys169, Cys142–Cys162, Cys151–Cys183, Cys317–Cys341, Cys352–Cys359, and Cys361–Cys380. Residues 133–185 form the Kazal-like domain; it reads GLPSSTCKPCPIAYASPVCGSDGHSYSSQCKLEYQACVLGKQISIKCEGRCPC. Residues 314–380 enclose the Thyroglobulin type-1 domain; it reads DPPCHTELSN…GSRINGVADC (67 aa). O-linked (Xyl...) (glycosaminoglycan) serine glycosylation is found at Ser387 and Ser392. The disordered stretch occupies residues 393 to 436; that stretch reads GDFREWTDDEGEEDDIMNDKDDIEDDDEDEGDDDDDGDVHDGYI. A compositionally biased stretch (acidic residues) spans 399 to 430; the sequence is TDDEGEEDDIMNDKDDIEDDDEDEGDDDDDGD.

Contains chondroitin sulfate and heparan sulfate O-linked oligosaccharides. As to expression, expressed in brain.

It is found in the secreted. The protein resides in the extracellular space. The protein localises to the extracellular matrix. May participate in diverse steps of neurogenesis. Inhibits the processing of pro-matrix metalloproteinase 2 (MMP-2) by MT1-MMP and MT3-MMP. May interfere with tumor invasion. The protein is Testican-3 (Spock3) of Mus musculus (Mouse).